The chain runs to 171 residues: uncharacterized protein (171 aa).

Residues 123–171 are disordered; sequence CTKRDLRNDPPPAYQPDDPLKDLRKNFEKKEKPTWNDVEKKKNGVFEFH. The segment covering 140-171 has biased composition (basic and acidic residues); it reads DPLKDLRKNFEKKEKPTWNDVEKKKNGVFEFH.

This is an uncharacterized protein from Caenorhabditis elegans.